A 131-amino-acid chain; its full sequence is MKFRKGRPKILRLISEEPQFKLFKPVGIPRTDLESEVLTFEELESIRLVDYLNHPHEDAADEMGISRRVFWNILKSARKKVADALINGKMIDIGGGYYKIRDCNYEDECQRGKFCKYGVSNCLRLKNRDSE.

The protein belongs to the UPF0251 family.

The polypeptide is UPF0251 protein MMP0619 (Methanococcus maripaludis (strain DSM 14266 / JCM 13030 / NBRC 101832 / S2 / LL)).